Here is a 313-residue protein sequence, read N- to C-terminus: Alpha-S1-casein (313 aa).

Positions 1 to 15 (MKLLILTCLVAAAFA) are cleaved as a signal peptide. Low complexity predominate over residues 77-96 (ASEEQAMASAQEDSSISSSS). The disordered stretch occupies residues 77-111 (ASEEQAMASAQEDSSISSSSEESEEAIPNITEQKN). A phosphoserine mark is found at serine 90, serine 91, serine 93, serine 94, serine 95, and serine 96. A run of 15 repeats spans residues 135–140 (LLQKAS), 141–146 (LAKQAS), 147–152 (LFQQPS), 153–158 (LVQQAS), 159–164 (LFQQPS), 165–170 (LLQQAS), 171–176 (LFQQPS), 177–182 (MAQQAS), 183–188 (LLQQLL), 189–194 (LAQQPS), 195–200 (LALQVS), 201–206 (PAQQSS), 207–212 (LVQQAF), 213–218 (LAQQAS), and 219–224 (LAQKHH). Residues 135-224 (LLQKASLAKQ…QQASLAQKHH (90 aa)) form a 15 X 6 AA tandem repeats region.

This sequence belongs to the alpha-casein family. In terms of tissue distribution, mammary gland specific. Secreted in milk.

It is found in the secreted. In terms of biological role, important role in the capacity of milk to transport calcium phosphate. The chain is Alpha-S1-casein (Csn1s1) from Mus musculus (Mouse).